The following is a 141-amino-acid chain: VLSASDKTNVKGVFAKVGGSAEAYGAETLERMFTAYPQTKTYFPHFDLHHGSAQIKAHGKKVAAALVEAANHIDDIAGALSKLSDLHAQKLRVDPVNFKLLGHCFLVVVAIHHPTLLTPEVHASLDKFMCAVAKELTAKYR.

The 141-residue stretch at 1–141 (VLSASDKTNV…VAKELTAKYR (141 aa)) folds into the Globin domain. Residue H58 participates in O2 binding. A heme b-binding site is contributed by H87.

Belongs to the globin family. As to quaternary structure, heterotetramer of two alpha chains and two beta chains. As to expression, red blood cells.

Involved in oxygen transport from the lung to the various peripheral tissues. The polypeptide is Hemoglobin subunit alpha-A (HBAA) (Phalacrocorax carbo (Great cormorant)).